The primary structure comprises 242 residues: DNA repair protein RecO (242 aa).

It belongs to the RecO family. As to quaternary structure, monomer.

Functionally, involved in DNA repair and RecF pathway recombination. In Salmonella dublin (strain CT_02021853), this protein is DNA repair protein RecO.